A 131-amino-acid polypeptide reads, in one-letter code: Ribonuclease P protein component (131 aa).

Belongs to the RnpA family. As to quaternary structure, consists of a catalytic RNA component (M1 or rnpB) and a protein subunit.

The enzyme catalyses Endonucleolytic cleavage of RNA, removing 5'-extranucleotides from tRNA precursor.. Functionally, RNaseP catalyzes the removal of the 5'-leader sequence from pre-tRNA to produce the mature 5'-terminus. It can also cleave other RNA substrates such as 4.5S RNA. The protein component plays an auxiliary but essential role in vivo by binding to the 5'-leader sequence and broadening the substrate specificity of the ribozyme. The sequence is that of Ribonuclease P protein component from Synechococcus sp. (strain WH7803).